A 97-amino-acid polypeptide reads, in one-letter code: Putative septation protein SpoVG (97 aa).

The protein belongs to the SpoVG family.

In terms of biological role, essential for sporulation. Interferes with or is a negative regulator of the pathway leading to asymmetric septation. The chain is Putative septation protein SpoVG from Bacillus cytotoxicus (strain DSM 22905 / CIP 110041 / 391-98 / NVH 391-98).